The sequence spans 527 residues: Methane monooxygenase component A alpha chain (527 aa).

E114, E144, and H147 together coordinate Fe cation. C151 is a catalytic residue. Residues E209, E243, and H246 each coordinate Fe cation.

It belongs to the TmoA/XamoA family. In terms of assembly, m.capsulatus has two forms of methane monooxygenase, a soluble and a membrane-bound type. The soluble type consists of four components (A to D): protein A, comprising three chains, in an alpha-2, beta-2, gamma-2 configuration, is a nonheme iron protein containing an unusual mu-hydroxo bridge structure at its active site and interacts with both oxygen and methane. It depends on Fe cation as a cofactor.

The catalysed reaction is methane + NADH + O2 + H(+) = methanol + NAD(+) + H2O. The enzyme catalyses methane + NADPH + O2 + H(+) = methanol + NADP(+) + H2O. In terms of biological role, responsible for the initial oxygenation of methane to methanol in methanotrophs. It also catalyzes the monohydroxylation of a variety of unactivated alkenes, alicyclic, aromatic and heterocyclic compounds. In Methylococcus capsulatus (strain ATCC 33009 / NCIMB 11132 / Bath), this protein is Methane monooxygenase component A alpha chain (mmoX).